The chain runs to 179 residues: ATP-dependent protease subunit HslV (179 aa).

The active site involves Thr5. Na(+) contacts are provided by Gly164, Cys167, and Thr170.

It belongs to the peptidase T1B family. HslV subfamily. In terms of assembly, a double ring-shaped homohexamer of HslV is capped on each side by a ring-shaped HslU homohexamer. The assembly of the HslU/HslV complex is dependent on binding of ATP.

It localises to the cytoplasm. The catalysed reaction is ATP-dependent cleavage of peptide bonds with broad specificity.. Allosterically activated by HslU binding. Protease subunit of a proteasome-like degradation complex believed to be a general protein degrading machinery. This is ATP-dependent protease subunit HslV from Verminephrobacter eiseniae (strain EF01-2).